The following is a 396-amino-acid chain: Polygalacturonase (396 aa).

An N-terminal signal peptide occupies residues 1–22 (MDLKFKVHFALVLLFLAHFGES). Residues N143, N151, N174, N181, N203, and N208 are each glycosylated (N-linked (GlcNAc...) asparagine). PbH1 repeat units follow at residues 172–198 (CKNL…HVSR) and 199–220 (SSSV…SVGD). D213 acts as the Proton donor in catalysis. Cysteines 215 and 232 form a disulfide. H236 is an active-site residue. PbH1 repeat units lie at residues 252-273 (VVGV…RIKT), 282-303 (VNDV…VIDQ), and 316-356 (PSQV…EVGD). N-linked (GlcNAc...) asparagine glycans are attached at residues N259 and N294. The segment at 364 to 396 (KEGPAKSSCENIKPSLKGKQNPPVCTASAASSS) is disordered. Residues C372 and C388 are joined by a disulfide bond.

The protein belongs to the glycosyl hydrolase 28 family. As to expression, pollen.

The protein resides in the secreted. Its subcellular location is the cell wall. The enzyme catalyses (1,4-alpha-D-galacturonosyl)n+m + H2O = (1,4-alpha-D-galacturonosyl)n + (1,4-alpha-D-galacturonosyl)m.. In terms of biological role, may function in depolymerizing pectin during pollen development, germination, and tube growth. The chain is Polygalacturonase (PG1) from Nicotiana tabacum (Common tobacco).